A 124-amino-acid chain; its full sequence is Large ribosomal subunit protein bL12 (124 aa).

The protein belongs to the bacterial ribosomal protein bL12 family. Homodimer. Part of the ribosomal stalk of the 50S ribosomal subunit. Forms a multimeric L10(L12)X complex, where L10 forms an elongated spine to which 2 to 4 L12 dimers bind in a sequential fashion. Binds GTP-bound translation factors.

Functionally, forms part of the ribosomal stalk which helps the ribosome interact with GTP-bound translation factors. Is thus essential for accurate translation. The sequence is that of Large ribosomal subunit protein bL12 from Anaeromyxobacter dehalogenans (strain 2CP-C).